The following is a 185-amino-acid chain: Large ribosomal subunit protein uL5 (185 aa).

This sequence belongs to the universal ribosomal protein uL5 family. Part of the 50S ribosomal subunit; part of the 5S rRNA/L5/L18/L25 subcomplex. Contacts the 5S rRNA and the P site tRNA. Forms a bridge to the 30S subunit in the 70S ribosome.

This is one of the proteins that bind and probably mediate the attachment of the 5S RNA into the large ribosomal subunit, where it forms part of the central protuberance. In the 70S ribosome it contacts protein S13 of the 30S subunit (bridge B1b), connecting the 2 subunits; this bridge is implicated in subunit movement. Contacts the P site tRNA; the 5S rRNA and some of its associated proteins might help stabilize positioning of ribosome-bound tRNAs. In Rhizobium rhizogenes (strain K84 / ATCC BAA-868) (Agrobacterium radiobacter), this protein is Large ribosomal subunit protein uL5.